A 299-amino-acid polypeptide reads, in one-letter code: MKKKLIIVVGPTASGKSDLTFKLAQDLKSEIIVCDAYQVYKEISKGINKPEIENLNAIKHHFVNHVSINEVWHIKRFKEEIEELINSNMDKNFILEGGSNLYIDCLINNYQLNELDLTLDYSNLSNDELYEKLQKLDFEESLKISKNNKKRLIQALRIIESNNNTKKSVLDKNNKEPLYDFFLIRMIIDRDILYKKINDRADKMFKNNWREEVEQLIKANGNSMMNTNALKALGYDEIYNSIIENRETNLDLIKQKTRNYAKRQETWIRNKFKIDFNFSNYDQYNELLDKCKAFLNDKK.

10–17 (GPTASGKS) contacts ATP. 12–17 (TASGKS) contributes to the substrate binding site.

Belongs to the IPP transferase family. In terms of assembly, monomer. The cofactor is Mg(2+).

It catalyses the reaction adenosine(37) in tRNA + dimethylallyl diphosphate = N(6)-dimethylallyladenosine(37) in tRNA + diphosphate. In terms of biological role, catalyzes the transfer of a dimethylallyl group onto the adenine at position 37 in tRNAs that read codons beginning with uridine, leading to the formation of N6-(dimethylallyl)adenosine (i(6)A). The sequence is that of tRNA dimethylallyltransferase from Malacoplasma penetrans (strain HF-2) (Mycoplasma penetrans).